The primary structure comprises 151 residues: Deoxyuridine 5'-triphosphate nucleotidohydrolase (151 aa).

Residues Arg70 to Gly72, Asn83, Leu87 to Asp89, and Met97 contribute to the substrate site.

It belongs to the dUTPase family. Mg(2+) serves as cofactor.

The enzyme catalyses dUTP + H2O = dUMP + diphosphate + H(+). The protein operates within pyrimidine metabolism; dUMP biosynthesis; dUMP from dCTP (dUTP route): step 2/2. Its function is as follows. This enzyme is involved in nucleotide metabolism: it produces dUMP, the immediate precursor of thymidine nucleotides and it decreases the intracellular concentration of dUTP so that uracil cannot be incorporated into DNA. The polypeptide is Deoxyuridine 5'-triphosphate nucleotidohydrolase (Pseudomonas fluorescens (strain Pf0-1)).